Reading from the N-terminus, the 305-residue chain is GS homeobox 2 (305 aa).

Disordered stretches follow at residues 115–151 (DAQF…AAAA) and 259–305 (KKEG…ISPL). The segment covering 123–140 (SHAHHHHHPPQHHHHHHQ) has biased composition (basic residues). Positions 141–151 (PQQPGSAAAAA) are enriched in low complexity. The segment at residues 203 to 262 (GKRMRTAFTSTQLLELEREFSSNMYLSRLRRIEIATYLNLSEKQVKIWFQNRRVKHKKEG) is a DNA-binding region (homeobox).

Belongs to the Antp homeobox family.

It is found in the nucleus. Functionally, transcription factor that binds 5'-CNAATTAG-3' DNA sequence and regulates the expression of numerous genes including genes important for brain development. During telencephalic development, causes ventralization of pallial progenitors and, depending on the developmental stage, specifies different neuronal fates. At early stages, necessary and sufficient to correctly specify the ventral lateral ganglionic eminence (LGE) and its major derivatives, the striatal projection neurons. At later stages, may specify LGE progenitors toward dorsal LGE fates, including olfactory bulb interneurons. The sequence is that of GS homeobox 2 (Gsx2) from Mus musculus (Mouse).